Reading from the N-terminus, the 317-residue chain is Adenosine receptor A3 (317 aa).

The Extracellular portion of the chain corresponds to 1–14 (MPVNSTAVSLASVT). Asn4 is a glycosylation site (N-linked (GlcNAc...) asparagine). A helical membrane pass occupies residues 15 to 37 (YISVEILIGLCAIVGNVLVIWVV). Residues 38–48 (KLNPSLQTTTF) lie on the Cytoplasmic side of the membrane. The helical transmembrane segment at 49-72 (YFIVSLALADIAVGVLVMPLAIVI) threads the bilayer. At 73 to 84 (SLGVTIHFYSCL) the chain is on the extracellular side. A disulfide bridge connects residues Cys83 and Cys165. The helical transmembrane segment at 85–106 (LMTCLLMIFTHASIMSLLAIAV) threads the bilayer. Residues 107–126 (DRYLRVKLTVRYRRVTTQRR) lie on the Cytoplasmic side of the membrane. The chain crosses the membrane as a helical span at residues 127–148 (IWLALGLCWLVSFLVGLTPMFG). The Extracellular portion of the chain corresponds to 149–176 (WNMKLSSADKNLTFLPCQFRSVMRMDYM). A helical membrane pass occupies residues 177–197 (VYFSFFTWILIPLVVMCAIYF). Over 198–230 (DIFYVIRNRLSQNFSGSKETGAFYGREFKTAKS) the chain is Cytoplasmic. Residues 231–254 (LSLVLFLFALSWLPLSIINCIIYF) form a helical membrane-spanning segment. Over 255 to 260 (NGEVPQ) the chain is Extracellular. Residues 261-283 (IVLYLGILLSHANSMMNPIVYAY) form a helical membrane-spanning segment. Over 284 to 317 (KIKKFKETYLLILKACVICQPSKSMDPSIEQTSE) the chain is Cytoplasmic. The S-palmitoyl cysteine moiety is linked to residue Cys302.

This sequence belongs to the G-protein coupled receptor 1 family. Phosphorylation on Thr-315 and Ser-316 may be crucial for rapid desensitization. Phosphorylation on Thr-315 may be necessary for phosphorylation on Ser-316 to occur.

The protein localises to the cell membrane. Functionally, receptor for adenosine. The activity of this receptor is mediated by G proteins which inhibits adenylyl cyclase. The polypeptide is Adenosine receptor A3 (ADORA3) (Bos taurus (Bovine)).